We begin with the raw amino-acid sequence, 404 residues long: Exodeoxyribonuclease 7 large subunit (404 aa).

This sequence belongs to the XseA family. As to quaternary structure, heterooligomer composed of large and small subunits.

Its subcellular location is the cytoplasm. It catalyses the reaction Exonucleolytic cleavage in either 5'- to 3'- or 3'- to 5'-direction to yield nucleoside 5'-phosphates.. Its function is as follows. Bidirectionally degrades single-stranded DNA into large acid-insoluble oligonucleotides, which are then degraded further into small acid-soluble oligonucleotides. The chain is Exodeoxyribonuclease 7 large subunit from Mesoplasma florum (strain ATCC 33453 / NBRC 100688 / NCTC 11704 / L1) (Acholeplasma florum).